The sequence spans 299 residues: Endonuclease 4 (299 aa).

The N-terminal stretch at 1-24 (MSSSLRQWFARVLVLTQLINGALC) is a signal peptide. A divalent metal cation contacts are provided by Trp-25 and His-30. Position 25–30 (25–30 (WGKEGH)) interacts with substrate. Cys-34 and Cys-65 form a disulfide bridge. Residues Asp-69 and His-84 each contribute to the a divalent metal cation site. Substrate contacts are provided by residues 69-75 (DEIKHHW), 84-87 (HYVD), and 94-99 (NYEYCR). Disulfide bonds link Cys-93-Cys-246, Cys-101-Cys-111, and Cys-226-Cys-233. Substrate-binding residues include Asn-118 and Tyr-136. Asn-118 is a glycosylation site (N-linked (GlcNAc...) asparagine). A glycan (N-linked (GlcNAc...) asparagine) is linked at Asn-137. 5 residues coordinate a divalent metal cation: His-147, Asp-151, His-157, His-181, and Asp-185. The substrate binding stretch occupies residues 147–196 (HFIGDIHQPLHVGFLGDEGGNTITVRWYRRKTNLHHVWDNMIIESALKTY). Asn-198, Asn-211, and Asn-229 each carry an N-linked (GlcNAc...) asparagine glycan. A propeptide spans 284–299 (ATLNRIFSSKPKHAGS) (removed in mature form).

The protein belongs to the nuclease type I family. As to quaternary structure, monomer. Mn(2+) serves as cofactor. The cofactor is Ca(2+).

It catalyses the reaction Endonucleolytic cleavage to 5'-phosphomononucleotide and 5'-phosphooligonucleotide end-products.. In terms of biological role, endonuclease that can use single-stranded RNA and DNA as substrates. In contradiction with PubMed:23620482, cannot hydrolyze single-stranded DNA and does not cleave mismatches. This Arabidopsis thaliana (Mouse-ear cress) protein is Endonuclease 4.